A 266-amino-acid chain; its full sequence is Norfluorocurarine synthase 2 (266 aa).

Residues 11–121 (HFVLVHGAGH…VMPDSTHPPN (111 aa)) enclose the AB hydrolase-1 domain. Catalysis depends on residues S86, D216, and H244.

This sequence belongs to the AB hydrolase superfamily. As to quaternary structure, homodimer.

It carries out the reaction 17-dehydropreakuammicine + H2O = norfluorocurarine + methanol + CO2. The protein operates within alkaloid biosynthesis. In terms of biological role, hydrolase involved in the biosynthesis of curare monoterpene indole alkaloids (MIAs), natural products such as diaboline, a pharmacologically active compound used to regulate blood pressure. Curare alkaloids act as animal glycine receptor antagonists. Catalyzes the conversion of dehydropreakuammicine to norfluorocurarine. This chain is Norfluorocurarine synthase 2, found in Strychnos sp.